Reading from the N-terminus, the 411-residue chain is uncharacterized protein (411 aa).

Disordered stretches follow at residues 1–91 and 253–280; these read METP…QDEE and KGPL…AYSP. Residues 46 to 57 show a composition bias toward acidic residues; the sequence is ETTESADSENDM. A compositionally biased stretch (low complexity) spans 74–86; the sequence is SNESFSSNQSTES. Residues 258–272 show a composition bias toward basic and acidic residues; the sequence is RRNEEDENKPQEKRP. At Ser-279 the chain carries Phosphoserine.

In terms of tissue distribution, widely expressed, highest levels in cerebellum, brain cortex, hippocampus, pons, putamen and amygdala. Highly expressed in neurons, but also present in glial cells. Slightly higher expression in the dorsolateral prefrontal cortex of schizophrenic patients compared to control individuals.

It is found in the cytoplasm. This is an uncharacterized protein from Homo sapiens (Human).